The following is a 514-amino-acid chain: Na(+)/H(+) antiporter NhaB (514 aa).

A run of 12 helical transmembrane segments spans residues 23–43, 63–83, 97–117, 120–140, 144–164, 202–222, 238–258, 303–323, 357–377, 391–411, 447–467, and 475–495; these read LALL…PFIA, PLLP…TSAA, LLLM…LFIF, LLLS…AAAF, FLDA…FYGI, LMMH…VGEP, FFLR…LTCM, AVIG…VGLI, LTVF…APII, LFYL…VGTI, ATPN…APLI, and VWMA…CVEF.

It belongs to the NhaB Na(+)/H(+) (TC 2.A.34) antiporter family.

The protein localises to the cell inner membrane. It catalyses the reaction 2 Na(+)(in) + 3 H(+)(out) = 2 Na(+)(out) + 3 H(+)(in). Its function is as follows. Na(+)/H(+) antiporter that extrudes sodium in exchange for external protons. The chain is Na(+)/H(+) antiporter NhaB from Salmonella gallinarum (strain 287/91 / NCTC 13346).